Here is a 39-residue protein sequence, read N- to C-terminus: Photosystem II reaction center protein J (39 aa).

Residues 7–27 traverse the membrane as a helical segment; it reads IPLWLVATIGGIAVLTVLGLF.

This sequence belongs to the PsbJ family. As to quaternary structure, PSII is composed of 1 copy each of membrane proteins PsbA, PsbB, PsbC, PsbD, PsbE, PsbF, PsbH, PsbI, PsbJ, PsbK, PsbL, PsbM, PsbT, PsbX, PsbY, PsbZ, Psb30/Ycf12, at least 3 peripheral proteins of the oxygen-evolving complex and a large number of cofactors. It forms dimeric complexes.

It localises to the plastid. The protein resides in the chloroplast thylakoid membrane. In terms of biological role, one of the components of the core complex of photosystem II (PSII). PSII is a light-driven water:plastoquinone oxidoreductase that uses light energy to abstract electrons from H(2)O, generating O(2) and a proton gradient subsequently used for ATP formation. It consists of a core antenna complex that captures photons, and an electron transfer chain that converts photonic excitation into a charge separation. In Cyanidioschyzon merolae (strain NIES-3377 / 10D) (Unicellular red alga), this protein is Photosystem II reaction center protein J.